The sequence spans 320 residues: Sucrose operon repressor (320 aa).

The region spanning 1–55 is the HTH lacI-type domain; sequence MKNIADIAKIAGVSKSTVSRYLNNGSVSLKTQQKLDEIIRENDYQPNQFAQSLRA. The segment at residues 4–23 is a DNA-binding region (H-T-H motif); sequence IADIAKIAGVSKSTVSRYLN.

Its function is as follows. Negative regulator of scrB expression. This is Sucrose operon repressor (scrR) from Staphylococcus xylosus.